We begin with the raw amino-acid sequence, 160 residues long: CXXC motif containing zinc binding protein (160 aa).

Cys-33, Cys-36, Cys-67, and Cys-70 together coordinate Zn(2+). A Phosphoserine modification is found at Ser-75.

The protein belongs to the UPF0587 family. Monomer.

The chain is CXXC motif containing zinc binding protein (Czib) from Mus musculus (Mouse).